A 579-amino-acid chain; its full sequence is Carotenoid-cleaving dioxygenase, mitochondrial (579 aa).

4 residues coordinate Fe cation: His-226, His-286, His-357, and His-573.

This sequence belongs to the carotenoid oxygenase family. The cofactor is Fe(2+). In terms of tissue distribution, highly expressed in retinal pigment epithelium. Also expressed in stomach, small intestine, liver, testis, kidney, adrenal gland, pancreas, heart, skeletal muscle and prostate (at protein level).

The protein resides in the mitochondrion. It carries out the reaction all-trans-beta-carotene + O2 = beta-ionone + all-trans-10'-apo-beta-carotenal. The enzyme catalyses 5-cis-lycopene + O2 = 5-cis-10'-apo-lycopenal + (3E,5E)-6,10-dimethylundeca-3,5,9-trien-2-one. It catalyses the reaction 13-cis-lycopene + O2 = 13-cis-10'-apo-lycopenal + (3E,5E)-6,10-dimethylundeca-3,5,9-trien-2-one. The catalysed reaction is lutein + O2 = (3R,6R)-hydroxy-alpha-ionone + (3R)-3-hydroxy-10'-apo-beta-carotenal. It carries out the reaction lutein + O2 = (3R,6R)-3-hydroxy-10'-apo-alpha-carotenal + (3R)-hydroxy-beta-ionone. The enzyme catalyses all-trans-zeaxanthin + 2 O2 = 4,9-dimethyldodeca-2,4,6,8,10-pentaenedial + 2 (3R)-hydroxy-beta-ionone. It catalyses the reaction all-trans-zeaxanthin + O2 = (3R)-3-hydroxy-10'-apo-beta-carotenal + (3R)-hydroxy-beta-ionone. The catalysed reaction is beta-cryptoxanthin + O2 = all-trans-10'-apo-beta-carotenal + (3R)-hydroxy-beta-ionone. It carries out the reaction all-trans-10'-apo-beta-carotenal + O2 = beta-ionone + 4,9-dimethyldodeca-2,4,6,8,10-pentaenedial. The enzyme catalyses (3R)-3-hydroxy-10'-apo-beta-carotenal + O2 = 4,9-dimethyldodeca-2,4,6,8,10-pentaenedial + (3R)-hydroxy-beta-ionone. It catalyses the reaction (3R,6R)-3-hydroxy-10'-apo-alpha-carotenal + O2 = (3R,6R)-hydroxy-alpha-ionone + 4,9-dimethyldodeca-2,4,6,8,10-pentaenedial. Its function is as follows. Broad specificity mitochondrial dioxygenase that mediates the asymmetric oxidative cleavage of carotenoids. Cleaves carotenes (pure hydrocarbon carotenoids) such as all-trans-beta-carotene and lycopene as well as xanthophylls (oxygenated carotenoids) such as zeaxanthin, lutein and beta-cryptoxanthin at both the 9,10 and the 9',10' carbon-carbon double bond. Through its function in carotenoids metabolism regulates oxidative stress and the production of important signaling molecules. In Homo sapiens (Human), this protein is Carotenoid-cleaving dioxygenase, mitochondrial.